Reading from the N-terminus, the 336-residue chain is Protease HtpX homolog (336 aa).

The next 2 helical transmembrane spans lie at 7–24 and 29–48; these read AMLL…GFLI and GMMI…YWNA. His-130 contacts Zn(2+). Glu-131 is a catalytic residue. His-134 lines the Zn(2+) pocket. The next 2 helical transmembrane spans lie at 145–165 and 171–191; these read IVAT…FLGG and PFGF…AMIV. Glu-200 is a Zn(2+) binding site. Low complexity predominate over residues 278–287; that stretch reads QQMAGGTQAA. The interval 278–336 is disordered; sequence QQMAGGTQAAPRPTPRQAGEQQPSGPWGQAPQAEQPAEPERPKANPWGRNPTGPKGRWS.

It belongs to the peptidase M48B family. Zn(2+) is required as a cofactor.

It localises to the cell inner membrane. This is Protease HtpX homolog from Mesorhizobium japonicum (strain LMG 29417 / CECT 9101 / MAFF 303099) (Mesorhizobium loti (strain MAFF 303099)).